The chain runs to 110 residues: DNA-directed RNA polymerase subunit omega (110 aa).

It belongs to the RNA polymerase subunit omega family. As to quaternary structure, the RNAP catalytic core consists of 2 alpha, 1 beta, 1 beta' and 1 omega subunit. When a sigma factor is associated with the core the holoenzyme is formed, which can initiate transcription.

It carries out the reaction RNA(n) + a ribonucleoside 5'-triphosphate = RNA(n+1) + diphosphate. Functionally, promotes RNA polymerase assembly. Latches the N- and C-terminal regions of the beta' subunit thereby facilitating its interaction with the beta and alpha subunits. The sequence is that of DNA-directed RNA polymerase subunit omega from Mycobacterium leprae (strain Br4923).